The sequence spans 237 residues: uncharacterized protein (237 aa).

Residues 1–26 (MKRIRDVLSHENSNNTNYSDTNDTDY) are disordered. Low complexity predominate over residues 12-21 (NSNNTNYSDT).

It belongs to the mimivirus R160 family.

This is an uncharacterized protein from Acanthamoeba polyphaga mimivirus (APMV).